Here is a 177-residue protein sequence, read N- to C-terminus: Dual-action ribosomal maturation protein DarP (177 aa).

Belongs to the DarP family.

Its subcellular location is the cytoplasm. Functionally, member of a network of 50S ribosomal subunit biogenesis factors which assembles along the 30S-50S interface, preventing incorrect 23S rRNA structures from forming. Promotes peptidyl transferase center (PTC) maturation. This chain is Dual-action ribosomal maturation protein DarP, found in Histophilus somni (strain 129Pt) (Haemophilus somnus).